The sequence spans 336 residues: Glycerol-3-phosphate dehydrogenase [NAD(P)+] (336 aa).

Residues serine 16, tyrosine 17, histidine 37, and lysine 111 each contribute to the NADPH site. Sn-glycerol 3-phosphate contacts are provided by lysine 111, glycine 140, and threonine 142. Alanine 144 contacts NADPH. Residues lysine 196, aspartate 249, serine 259, arginine 260, and asparagine 261 each contribute to the sn-glycerol 3-phosphate site. The active-site Proton acceptor is the lysine 196. Residue arginine 260 participates in NADPH binding. NADPH-binding residues include valine 284 and glutamate 286.

The protein belongs to the NAD-dependent glycerol-3-phosphate dehydrogenase family.

It is found in the cytoplasm. It catalyses the reaction sn-glycerol 3-phosphate + NAD(+) = dihydroxyacetone phosphate + NADH + H(+). It carries out the reaction sn-glycerol 3-phosphate + NADP(+) = dihydroxyacetone phosphate + NADPH + H(+). The protein operates within membrane lipid metabolism; glycerophospholipid metabolism. Functionally, catalyzes the reduction of the glycolytic intermediate dihydroxyacetone phosphate (DHAP) to sn-glycerol 3-phosphate (G3P), the key precursor for phospholipid synthesis. This is Glycerol-3-phosphate dehydrogenase [NAD(P)+] from Actinobacillus pleuropneumoniae serotype 5b (strain L20).